The sequence spans 463 residues: Cysteine--tRNA ligase (463 aa).

Residue Cys-33 participates in Zn(2+) binding. The 'HIGH' region signature appears at 35 to 45; sequence PTVYDFAHIGN. Cys-221, His-246, and Glu-250 together coordinate Zn(2+). The 'KMSKS' region signature appears at 279–283; it reads KMSKS. Residue Lys-282 participates in ATP binding.

Belongs to the class-I aminoacyl-tRNA synthetase family. In terms of assembly, monomer. The cofactor is Zn(2+).

Its subcellular location is the cytoplasm. The catalysed reaction is tRNA(Cys) + L-cysteine + ATP = L-cysteinyl-tRNA(Cys) + AMP + diphosphate. The protein is Cysteine--tRNA ligase of Rhizobium rhizogenes (strain K84 / ATCC BAA-868) (Agrobacterium radiobacter).